We begin with the raw amino-acid sequence, 350 residues long: Putative [LysW]-lysine/[LysW]-ornithine hydrolase (350 aa).

His72 lines the Zn(2+) pocket. Asp74 is a catalytic residue. Asp96 contributes to the Zn(2+) binding site. Glu128 acts as the Proton acceptor in catalysis. Positions 129, 152, and 321 each coordinate Zn(2+).

Belongs to the peptidase M20A family. LysK subfamily. Requires Zn(2+) as cofactor. It depends on Co(2+) as a cofactor.

Its subcellular location is the cytoplasm. The catalysed reaction is [amino-group carrier protein]-C-terminal-gamma-(L-lysyl)-L-glutamate + H2O = [amino-group carrier protein]-C-terminal-L-glutamate + L-lysine. It catalyses the reaction [amino-group carrier protein]-C-terminal-gamma-(L-ornithyl)-L-glutamate + H2O = [amino-group carrier protein]-C-terminal-L-glutamate + L-ornithine. Its pathway is amino-acid biosynthesis; L-lysine biosynthesis via AAA pathway; L-lysine from L-alpha-aminoadipate (Thermus route): step 5/5. It participates in amino-acid biosynthesis; L-arginine biosynthesis. Its function is as follows. Catalyzes the release of L-lysine from [LysW]-gamma-L-lysine and the release of L-ornithine from [LysW]-L-ornithine. The protein is Putative [LysW]-lysine/[LysW]-ornithine hydrolase of Aeropyrum pernix (strain ATCC 700893 / DSM 11879 / JCM 9820 / NBRC 100138 / K1).